Reading from the N-terminus, the 157-residue chain is Crossover junction endodeoxyribonuclease RuvC (157 aa).

Active-site residues include D7, E66, and D139. Mg(2+) contacts are provided by D7, E66, and D139.

The protein belongs to the RuvC family. In terms of assembly, homodimer which binds Holliday junction (HJ) DNA. The HJ becomes 2-fold symmetrical on binding to RuvC with unstacked arms; it has a different conformation from HJ DNA in complex with RuvA. In the full resolvosome a probable DNA-RuvA(4)-RuvB(12)-RuvC(2) complex forms which resolves the HJ. The cofactor is Mg(2+).

Its subcellular location is the cytoplasm. The catalysed reaction is Endonucleolytic cleavage at a junction such as a reciprocal single-stranded crossover between two homologous DNA duplexes (Holliday junction).. Functionally, the RuvA-RuvB-RuvC complex processes Holliday junction (HJ) DNA during genetic recombination and DNA repair. Endonuclease that resolves HJ intermediates. Cleaves cruciform DNA by making single-stranded nicks across the HJ at symmetrical positions within the homologous arms, yielding a 5'-phosphate and a 3'-hydroxyl group; requires a central core of homology in the junction. The consensus cleavage sequence is 5'-(A/T)TT(C/G)-3'. Cleavage occurs on the 3'-side of the TT dinucleotide at the point of strand exchange. HJ branch migration catalyzed by RuvA-RuvB allows RuvC to scan DNA until it finds its consensus sequence, where it cleaves and resolves the cruciform DNA. The chain is Crossover junction endodeoxyribonuclease RuvC from Campylobacter curvus (strain 525.92).